Consider the following 261-residue polypeptide: Ribosomal RNA small subunit methyltransferase A (261 aa).

Residues His12, Leu14, Gly39, Glu60, Asp81, and Asn104 each coordinate S-adenosyl-L-methionine.

The protein belongs to the class I-like SAM-binding methyltransferase superfamily. rRNA adenine N(6)-methyltransferase family. RsmA subfamily.

The protein resides in the cytoplasm. The catalysed reaction is adenosine(1518)/adenosine(1519) in 16S rRNA + 4 S-adenosyl-L-methionine = N(6)-dimethyladenosine(1518)/N(6)-dimethyladenosine(1519) in 16S rRNA + 4 S-adenosyl-L-homocysteine + 4 H(+). In terms of biological role, specifically dimethylates two adjacent adenosines (A1518 and A1519) in the loop of a conserved hairpin near the 3'-end of 16S rRNA in the 30S particle. May play a critical role in biogenesis of 30S subunits. This Albidiferax ferrireducens (strain ATCC BAA-621 / DSM 15236 / T118) (Rhodoferax ferrireducens) protein is Ribosomal RNA small subunit methyltransferase A.